The sequence spans 118 residues: V-type proton ATPase subunit F (118 aa).

This sequence belongs to the V-ATPase F subunit family. As to quaternary structure, V-ATPase is a heteromultimeric enzyme composed of a peripheral catalytic V1 complex (components A to H) attached to an integral membrane V0 proton pore complex (components: a, c, c', c'', d, e, f and VOA1).

It is found in the vacuole membrane. Subunit of the V1 complex of vacuolar(H+)-ATPase (V-ATPase), a multisubunit enzyme composed of a peripheral complex (V1) that hydrolyzes ATP and a membrane integral complex (V0) that translocates protons. V-ATPase is responsible for acidifying and maintaining the pH of intracellular compartments. The chain is V-type proton ATPase subunit F from Saccharomyces cerevisiae (strain ATCC 204508 / S288c) (Baker's yeast).